The following is a 385-amino-acid chain: Na(+)/H(+) antiporter NhaA (385 aa).

11 helical membrane-spanning segments follow: residues 9–29, 45–65, 87–107, 114–134, 155–175, 198–218, 220–235, 245–265, 282–302, 312–332, and 345–365; these read YSAI…NVLD, IFGL…VFFF, IIPG…YLSV, GWPV…AIFG, AGIV…WIIV, TFLI…SVYQ, GIHA…IMLN, ALEP…AAMV, ILLG…IIAL, FFNL…SLLM, and QGVI…IILM.

It belongs to the NhaA Na(+)/H(+) (TC 2.A.33) antiporter family.

It localises to the cell membrane. The catalysed reaction is Na(+)(in) + 2 H(+)(out) = Na(+)(out) + 2 H(+)(in). Functionally, na(+)/H(+) antiporter that extrudes sodium in exchange for external protons. The chain is Na(+)/H(+) antiporter NhaA from Tropheryma whipplei (strain TW08/27) (Whipple's bacillus).